The following is a 300-amino-acid chain: N-acetylmuramic acid 6-phosphate etherase (300 aa).

Positions 57 to 220 (ITHAFAHGGR…TSGAMIRSGK (164 aa)) constitute an SIS domain. The Proton donor role is filled by glutamate 85. Glutamate 116 is an active-site residue.

It belongs to the GCKR-like family. MurNAc-6-P etherase subfamily. As to quaternary structure, homodimer.

It catalyses the reaction N-acetyl-D-muramate 6-phosphate + H2O = N-acetyl-D-glucosamine 6-phosphate + (R)-lactate. It functions in the pathway amino-sugar metabolism; 1,6-anhydro-N-acetylmuramate degradation. It participates in amino-sugar metabolism; N-acetylmuramate degradation. Its pathway is cell wall biogenesis; peptidoglycan recycling. In terms of biological role, specifically catalyzes the cleavage of the D-lactyl ether substituent of MurNAc 6-phosphate, producing GlcNAc 6-phosphate and D-lactate. Together with AnmK, is also required for the utilization of anhydro-N-acetylmuramic acid (anhMurNAc) either imported from the medium or derived from its own cell wall murein, and thus plays a role in cell wall recycling. In Vibrio vulnificus (strain CMCP6), this protein is N-acetylmuramic acid 6-phosphate etherase.